A 429-amino-acid chain; its full sequence is Endoglucanase A (429 aa).

Residues 1–34 form the signal peptide; that stretch reads MVSKKQKFLTVILVIVLAIVIVGGVFGISFVKGR. A compositionally biased stretch (basic and acidic residues) spans 46-94; sequence AKTEQVKEPAKEEPKLVIKEKKQDESAKKEQELKKAKEEAEAAVEKETE. The tract at residues 46-100 is disordered; it reads AKTEQVKEPAKEEPKLVIKEKKQDESAKKEQELKKAKEEAEAAVEKETEKTEEEP. Glutamate 249 (proton donor) is an active-site residue. Glutamate 334 acts as the Nucleophile in catalysis.

Belongs to the glycosyl hydrolase 5 (cellulase A) family.

It catalyses the reaction Endohydrolysis of (1-&gt;4)-beta-D-glucosidic linkages in cellulose, lichenin and cereal beta-D-glucans.. The polypeptide is Endoglucanase A (celA) (Butyrivibrio fibrisolvens).